A 579-amino-acid chain; its full sequence is UPF0324 membrane protein DVU_2133 (579 aa).

11 helical membrane passes run Tyr-26–Ala-45, Pro-193–Met-215, Phe-225–Gly-243, Tyr-250–Thr-272, Ile-305–Phe-327, Leu-369–Ile-391, Gly-401–Gly-423, Ile-436–Val-456, Phe-476–Gly-495, Leu-515–Arg-534, and Tyr-549–Val-571.

Belongs to the UPF0324 family.

The protein localises to the cell membrane. The protein is UPF0324 membrane protein DVU_2133 of Nitratidesulfovibrio vulgaris (strain ATCC 29579 / DSM 644 / CCUG 34227 / NCIMB 8303 / VKM B-1760 / Hildenborough) (Desulfovibrio vulgaris).